The following is a 573-amino-acid chain: CTP synthase (573 aa).

The interval 1-281 is amidoligase domain; sequence MGQTRIQART…DAYVVRRLGL (281 aa). CTP is bound at residue S23. S23 is a binding site for UTP. ATP is bound by residues 24–29 and D81; that span reads SLGKGL. Positions 81 and 155 each coordinate Mg(2+). CTP-binding positions include 162 to 164, 202 to 207, and K238; these read DIE and KTKPTQ. Residues 202–207 and K238 each bind UTP; that span reads KTKPTQ. The Glutamine amidotransferase type-1 domain maps to 306 to 554; sequence EVALVGKYVD…IAAALKYKLA (249 aa). L-glutamine is bound at residue G369. C396 functions as the Nucleophile; for glutamine hydrolysis in the catalytic mechanism. L-glutamine-binding positions include 397–400, E419, and R480; that span reads LGLQ. Residues H527 and E529 contribute to the active site.

This sequence belongs to the CTP synthase family. In terms of assembly, homotetramer.

The catalysed reaction is UTP + L-glutamine + ATP + H2O = CTP + L-glutamate + ADP + phosphate + 2 H(+). The enzyme catalyses L-glutamine + H2O = L-glutamate + NH4(+). It catalyses the reaction UTP + NH4(+) + ATP = CTP + ADP + phosphate + 2 H(+). The protein operates within pyrimidine metabolism; CTP biosynthesis via de novo pathway; CTP from UDP: step 2/2. With respect to regulation, allosterically activated by GTP, when glutamine is the substrate; GTP has no effect on the reaction when ammonia is the substrate. The allosteric effector GTP functions by stabilizing the protein conformation that binds the tetrahedral intermediate(s) formed during glutamine hydrolysis. Inhibited by the product CTP, via allosteric rather than competitive inhibition. Its function is as follows. Catalyzes the ATP-dependent amination of UTP to CTP with either L-glutamine or ammonia as the source of nitrogen. Regulates intracellular CTP levels through interactions with the four ribonucleotide triphosphates. The sequence is that of CTP synthase from Nocardia farcinica (strain IFM 10152).